A 194-amino-acid polypeptide reads, in one-letter code: Small ribosomal subunit protein uS5 (194 aa).

The 64-residue stretch at 26–89 folds into the S5 DRBM domain; sequence LEEKVVEIRR…ADAKKRIIKV (64 aa).

The protein belongs to the universal ribosomal protein uS5 family. As to quaternary structure, part of the 30S ribosomal subunit. Contacts proteins S4 and S8.

Functionally, with S4 and S12 plays an important role in translational accuracy. In terms of biological role, located at the back of the 30S subunit body where it stabilizes the conformation of the head with respect to the body. This chain is Small ribosomal subunit protein uS5, found in Sulfurihydrogenibium sp. (strain YO3AOP1).